Reading from the N-terminus, the 3189-residue chain is MEPLKNVNTGQPCSTVPFPVSDETVEHLNGLYEEINRRFGLDRDAIETILPCTPFQYDVLDCAANDARHAVGHAMYEISQHVHVQRFIAAWRETVRRTPALRACTFTSTTGESFQLVLRESFVLSRIYWSSSSSLQAAVLKDETTAAIAGPRCNRLVLLEDPDTRKQLLIWVFHLALVDSTVQEPILRRVLAAYKSEDDQLDSLPLTPDSSGGSDSDSPSTLKMPRAFDQEKATQFWQRQLSGLDASVFPPLSSHLTTPKADAKIEHYISWPASAAQHRWSSTTVCQAALAVLLSRYSHSSEALFGVVTEQVCMFEGQRLLINGPTRSVVPFRVHCGPEQSVTDLLKSIASDNHDMRQFAHVGLCNISRIGDDQSAACRFQTVLSVSNRRSSEDAASGEVLQILQESEGFAPCADRALLLRCETSRQGALLVARYDQGVIEPPQMARFLRQLGWLMEQLQSAADDALSVKQLDIVTREDRAEIDSWNSDALEVQESLLHSAFVKRAAESPSDPAVLSWDGAWTYSELDNVSSRLAAHIRSLDLSHEQLIVPVYFEKSKWVVASILAVLKAGHAFTLIDPKDPPARTTRIVQQTSAKVALTSKLHQDTVQAIIGRCIVVDDDFVQSLGSASQCQEKSELTVKPHNLAYAIFTSGSTGDPKGIMIEHQAFASCVAKFGPALIPHNARALQFASHGFGACLLEILPTLLRGGCVCIPSDLDRMHNIPDFIRRYNVNWMMATPSYMTTFKPEDVPGLQTLILVGEQMSASVNATWASRLGLFDGYGQSESCSICFIGKISPVSEANNIGRAVGAHSWIVHPDDPDRLAPVGAVGELLIESPGIARGYIAAPATDRNPFLETAPAWYAPRQPPTGVKFYRTGDLARYAADGTVVCLGRIDSQVKIRGQRVEMGAVETRLRQQVPSDITVVAEAVKRSGSSGSTVITAFLIDSSDKNNSSAASAKDARILDQTATQEMNAKLCQVLPPHSVPSCYICMHALPRTATGKVDRKTLRSIGSKLLEQQAYKKSPETMQKSKSAETLETGPEARLKEVWLQSFNLEPASPKCGASFFELGGDSITAIKMVNMARAAGLELKVSDIFQNPTLARLQAVMSGDSTPSTITTPFATIPASTWDGPVEQSYSQGRLWFLDQLDIGAVWYLIPYAVRMRGALNIDALRAALLALEQRHETLRTTFENQNGVGVQIVHQRLAKELKIIDASSHGDDGYLQPLEQEQTTPFDLTCEAGWRASLICVGEDHHVLSIVMHHIVSDGWSIDVLRQELGQLYAAVLHGDEDPLSAVSPLPIQYRDFSMWQRRQQVAEHDRQLQYWRKQLADCSPAKLPTDFPRPPLLSGDAGSVPVEISGELFQKLHRFCNVTSTTPFAVLLAAFRAAHYRLTGVDDAVVGTPIANRNRPELERLIGFFVNTQCMRITVDDDDTFEGLVRQVRRTTTEAFENEDVPFERVVSAMLPAGGGSRDLSQTPLAQLIFAVHSQENLGKFELEGLESEPVANKAYTRFDAEFHLFQTRDGLNGYLNFAAELFKLETMQNVVSVFLQILRHGLEQPKSLISVLPLTDGLKELDSMGLLKIHRGLEYQRDSSLVDIFRSQVATCPDTIAVIDSSARLTYAQLDHQSNLLEAWIRRKGLPAESLVGVLSPRSCETIIAFLGILKANLAYLPLDPKSPVSRMRDVLSDLPGHTIILLGSDVAAPDLELPCLELVRISDALKSGASAVNGSETTDLSAPSANSLAYVLYTSGSTGRPKGVMVEHRAIVRLVQRGVIPNFPPLRGAIMAHLFNTVFDGATYEIFLMLLNGGTLVCIDYLTTLSPKALETVFLREGINCAIMTPALLKLYLANARDGLKGLDMLMVAGDRFDPQDAVEAQTLVRGDCYNAYGPTENGVMSTLYKIDTSDSFINGVPLGRAIDNSGAYITDPNQQLVGPGVLGELIVTGDGLARGYTDPALDRDRFVQVVINGESVRAYRTGDRMRYRAGQDCLFEFFGRMDFQFKIRSNRIESAEVEAAILSHPLVRDAAIVVVGVQEEQEPEMVGFVVAADDAVEQEATDNQVEGWQELFESSMYNGIDAISPSALGKDFTGWTSMYDGSEIDKSEMQEWLDDTIHTLRDGHVPGHVLEIGTGTGMILFNLGSVESYVGLEPTKSAVEFVNKAIKTLPNLAGRAEVHTGTATDIDQLSGLRPDLVILNSVVQYFPTVEYLTRVVDALVRIRGVKRLFFGDVRSQALHRQFLAACAMHALGKTATRDDVRRYMAEREEREEELLVEPAFFTALMNRHPNLIQHVEILPKNIRATNELSAYRYAAVVHLRDPESAARPVYPIAADDWVDFQASQMRSDVLREYLRLSAGADTVAVCNIPYEKTIFERLIVESLDDNTGSDAPQSRLHGRSLDGAPWISAVRSDAESRASLSVPDLVQLAAESGFQVQVSAARQWSQSGALDAVFHRRHASSSQPTMRTLFQFPDDNALRASATLTNRPLQRLQRRRVAAQIRERLQTLVPSYMIPAKIVVLDQMPLNANGKVDRKELARRARTTTMTKKKKPQRLASEPACPISDIEVALCEEATATFGMQVGISDHFFKLGGHSLLATKLISRVGDRLKARLTVKDVFDHPIFSELAIVIREGLQNVVPVALNGGGQAKQGSAGVVAPRNEMETMLCEEFANVLGMDVGVTDNFFDLGGHSLMATKLAARIGRRLNTTISVKEVFEHPIVFQLANSLELGQLESDRVKHTMLADYTAFQLLSVEDLQGFLQNEISPQLECAHGGIQDVYPATHMQKAFLCDASTGHPKPLVPFYIDFPPDSDCSTLVEACSSLVKRFDMFRTVVVEAAGELYQVVLEHFDLQIDVVETEENVHAATNDFVDRILEVPVHLGQPLIQFTILKQASSVRVLLCLSHALYDGLSLEHVVRDLHMLYKGRSLLPANQFSRYMQYMDHTRKAGCDFWRDVIQDTPITVLGHVDAGGRELEVEAARTLHATKIISIPLQAVRSSIITQATVFNAACALVLSRETGAKDVVFGRIVSGRQGLPVSWQNIVGPCTNAVPVRARIIDDDDDNHRQMLRDMQDQYLLSLPFETLDFDEVRRSCTNWPATANNYACCVTYHDFSYHPESEMEQQRVEMGVLARKDALLKEEPVYDLGIAGEVEPDGVHLQVTVVAKTRLFSEERAAYLMEEVCRLFESLNSAL.

The condensation 1 stretch occupies residues 73–466 (HAMYEISQHV…EQLQSAADDA (394 aa)). Residues 202 to 223 (DSLPLTPDSSGGSDSDSPSTLK) form a disordered region. The span at 208 to 220 (PDSSGGSDSDSPS) shows a compositional bias: low complexity. Positions 507 to 901 (AESPSDPAVL…GRIDSQVKIR (395 aa)) are adenylation 1. In terms of domain architecture, Carrier 1 spans 1036-1112 (TLETGPEARL…RLQAVMSGDS (77 aa)). S1073 bears the O-(pantetheine 4'-phosphoryl)serine mark. Residues 1136–1569 (SYSQGRLWFL…KSLISVLPLT (434 aa)) are condensation 2. An adenylation 2 region spans residues 1599-2004 (FRSQVATCPD…GRMDFQFKIR (406 aa)). An S-adenosyl-L-methionine-dependent N-methyltransferase region spans residues 2072 to 2211 (MYNGIDAISP…FPTVEYLTRV (140 aa)). Carrier domains are found at residues 2557 to 2631 (CPIS…REGL) and 2654 to 2728 (APRN…ELGQ). O-(pantetheine 4'-phosphoryl)serine occurs at positions 2591 and 2688. The condensation 3 stretch occupies residues 2773–3181 (QDVYPATHMQ…AYLMEEVCRL (409 aa)).

This sequence belongs to the NRP synthetase family.

It carries out the reaction 3 (R)-2-hydroxy-3-methylbutanoate + 3 L-phenylalanine + 3 S-adenosyl-L-methionine + 6 ATP = beauvericin + 6 AMP + 3 S-adenosyl-L-homocysteine + 6 diphosphate + 6 H(+). In terms of biological role, beauvericin nonribosomal cyclodepsipeptide synthetase; part of the gene cluster that mediates the biosynthesis of beauvericin (BEA), a non-ribosomal cyclic hexadepsipeptide that shows antibiotic, antifungal, insecticidal, and cancer cell antiproliferative and antihaptotactic activity. Ketoisovalerate reductase BEA2 catalyzes the NADPH-specific reduction of ketoisovaleric acid to hydroxyisovalerate, a precursor for beauvericin biosynthesis. The nonribosomal cyclodepsipeptide synthetase BEA1 then catalyzes the formation of beauvericin via condensation and cyclization of 3 dipeptidol monomers, each composed of one unit of hydroxyisovalerate and one unit of N-methyl-phenylalanine. In Beauveria bassiana (White muscardine disease fungus), this protein is Beauvericin nonribosomal cyclodepsipeptide synthetase (Beas).